A 150-amino-acid polypeptide reads, in one-letter code: Cell division protein SepF (150 aa).

It belongs to the SepF family. As to quaternary structure, homodimer. Interacts with FtsZ.

Its subcellular location is the cytoplasm. Cell division protein that is part of the divisome complex and is recruited early to the Z-ring. Probably stimulates Z-ring formation, perhaps through the cross-linking of FtsZ protofilaments. Its function overlaps with FtsA. This is Cell division protein SepF from Clostridium botulinum (strain ATCC 19397 / Type A).